A 213-amino-acid chain; its full sequence is Glutathione S-transferase DHAR2 (213 aa).

Residue C6 is modified to S-glutathionyl cysteine. 2 residues coordinate glutathione: K8 and D19. 2 residues coordinate L-ascorbate: K8 and D19. One can recognise a GST N-terminal domain in the interval 10–83 (AVGAPDVLGD…DVIVGLLEEK (74 aa)). C20 bears the S-glutathionyl cysteine mark. C20 serves as the catalytic Nucleophile. The Glutathione-binding motif lies at 20–25 (CPFSQR). Glutathione-binding residues include K47, V60, S73, H160, and W207. Residues 84–213 (YPEPSLKTPP…VAGWESKVNA (130 aa)) form the GST C-terminal domain. K210 serves as a coordination point for L-ascorbate.

It belongs to the GST superfamily. DHAR family. As to quaternary structure, monomer. Post-translationally, spontaneous S-glutathionylation in the presence of oxidized glutathione (GSSG).

The protein localises to the cytoplasm. The protein resides in the cytosol. The enzyme catalyses RX + glutathione = an S-substituted glutathione + a halide anion + H(+). It carries out the reaction L-dehydroascorbate + 2 glutathione = glutathione disulfide + L-ascorbate. Functionally, displays a dual function. As a soluble protein, exhibits glutathione-dependent thiol transferase and dehydroascorbate (DHA) reductase activities. Exhibits glutathione-dependent thiol transferase and dehydroascorbate (DHA) reductase activities. Key component of the ascorbate recycling system. Involved in the redox homeostasis, especially in scavenging of ROS under oxidative stresses. Plays a role in ozone tolerance. This Arabidopsis thaliana (Mouse-ear cress) protein is Glutathione S-transferase DHAR2 (DHAR2).